The sequence spans 222 residues: Adenylate kinase (222 aa).

10 to 15 contacts ATP; that stretch reads GAGKGT. The tract at residues 30–59 is NMP; it reads STGDMLRAAVKAGTPLGIEAKKVMDAGGLV. AMP-binding positions include Thr31, Arg36, 57 to 59, 85 to 88, and Gln92; these read GLV and GFPR. The interval 122-159 is LID; that stretch reads GRRVHVASGRTYHVKYNPPKTEGVDDESGEPLIQRDDD. ATP is bound by residues Arg123 and 132–133; that span reads TY. A disordered region spans residues 138 to 160; the sequence is NPPKTEGVDDESGEPLIQRDDDK. AMP-binding residues include Arg156 and Arg167. Gly207 provides a ligand contact to ATP.

Belongs to the adenylate kinase family. Monomer.

The protein resides in the cytoplasm. It carries out the reaction AMP + ATP = 2 ADP. It participates in purine metabolism; AMP biosynthesis via salvage pathway; AMP from ADP: step 1/1. Functionally, catalyzes the reversible transfer of the terminal phosphate group between ATP and AMP. Plays an important role in cellular energy homeostasis and in adenine nucleotide metabolism. The chain is Adenylate kinase from Ralstonia pickettii (strain 12J).